A 252-amino-acid polypeptide reads, in one-letter code: Indole-3-glycerol phosphate synthase (252 aa).

Belongs to the TrpC family.

The catalysed reaction is 1-(2-carboxyphenylamino)-1-deoxy-D-ribulose 5-phosphate + H(+) = (1S,2R)-1-C-(indol-3-yl)glycerol 3-phosphate + CO2 + H2O. It functions in the pathway amino-acid biosynthesis; L-tryptophan biosynthesis; L-tryptophan from chorismate: step 4/5. In Listeria monocytogenes serotype 4b (strain CLIP80459), this protein is Indole-3-glycerol phosphate synthase.